A 440-amino-acid polypeptide reads, in one-letter code: UDP-N-acetylmuramoylalanine--D-glutamate ligase (440 aa).

Residue 113-119 (GTNGKST) coordinates ATP.

The protein belongs to the MurCDEF family.

The protein localises to the cytoplasm. It carries out the reaction UDP-N-acetyl-alpha-D-muramoyl-L-alanine + D-glutamate + ATP = UDP-N-acetyl-alpha-D-muramoyl-L-alanyl-D-glutamate + ADP + phosphate + H(+). The protein operates within cell wall biogenesis; peptidoglycan biosynthesis. In terms of biological role, cell wall formation. Catalyzes the addition of glutamate to the nucleotide precursor UDP-N-acetylmuramoyl-L-alanine (UMA). This is UDP-N-acetylmuramoylalanine--D-glutamate ligase (murD) from Buchnera aphidicola subsp. Schizaphis graminum (strain Sg).